Consider the following 411-residue polypeptide: LL-diaminopimelate aminotransferase (411 aa).

2 residues coordinate substrate: tyrosine 15 and glycine 42. Pyridoxal 5'-phosphate contacts are provided by residues tyrosine 72, 108-109, tyrosine 132, asparagine 187, tyrosine 218, and 246-248; these read SK and SFS. Substrate-binding residues include lysine 109, tyrosine 132, and asparagine 187. Lysine 249 is subject to N6-(pyridoxal phosphate)lysine. Pyridoxal 5'-phosphate contacts are provided by arginine 257 and asparagine 292. Residues asparagine 292 and arginine 388 each coordinate substrate.

The protein belongs to the class-I pyridoxal-phosphate-dependent aminotransferase family. LL-diaminopimelate aminotransferase subfamily. Homodimer. Pyridoxal 5'-phosphate serves as cofactor.

It carries out the reaction (2S,6S)-2,6-diaminopimelate + 2-oxoglutarate = (S)-2,3,4,5-tetrahydrodipicolinate + L-glutamate + H2O + H(+). It functions in the pathway amino-acid biosynthesis; L-lysine biosynthesis via DAP pathway; LL-2,6-diaminopimelate from (S)-tetrahydrodipicolinate (aminotransferase route): step 1/1. Functionally, involved in the synthesis of meso-diaminopimelate (m-DAP or DL-DAP), required for both lysine and peptidoglycan biosynthesis. Catalyzes the direct conversion of tetrahydrodipicolinate to LL-diaminopimelate. This is LL-diaminopimelate aminotransferase from Geobacter sp. (strain M21).